Consider the following 176-residue polypeptide: Small ribosomal subunit protein uS5 (176 aa).

Residues 11-74 (LSEVLVDVNR…QAAKKRMMKV (64 aa)) enclose the S5 DRBM domain.

Belongs to the universal ribosomal protein uS5 family. Part of the 30S ribosomal subunit. Contacts proteins S4 and S8.

In terms of biological role, with S4 and S12 plays an important role in translational accuracy. Its function is as follows. Located at the back of the 30S subunit body where it stabilizes the conformation of the head with respect to the body. The protein is Small ribosomal subunit protein uS5 of Rickettsia massiliae (strain Mtu5).